We begin with the raw amino-acid sequence, 327 residues long: Undecaprenyl-phosphate 4-deoxy-4-formamido-L-arabinose transferase (327 aa).

2 helical membrane-spanning segments follow: residues 235 to 255 and 270 to 290; these read LLSL…VLLV and VFTL…GMGL.

The protein belongs to the glycosyltransferase 2 family.

It localises to the cell inner membrane. It carries out the reaction UDP-4-deoxy-4-formamido-beta-L-arabinose + di-trans,octa-cis-undecaprenyl phosphate = 4-deoxy-4-formamido-alpha-L-arabinopyranosyl di-trans,octa-cis-undecaprenyl phosphate + UDP. It participates in glycolipid biosynthesis; 4-amino-4-deoxy-alpha-L-arabinose undecaprenyl phosphate biosynthesis; 4-amino-4-deoxy-alpha-L-arabinose undecaprenyl phosphate from UDP-4-deoxy-4-formamido-beta-L-arabinose and undecaprenyl phosphate: step 1/2. Its pathway is bacterial outer membrane biogenesis; lipopolysaccharide biosynthesis. Its function is as follows. Catalyzes the transfer of 4-deoxy-4-formamido-L-arabinose from UDP to undecaprenyl phosphate. The modified arabinose is attached to lipid A and is required for resistance to polymyxin and cationic antimicrobial peptides. In Yersinia pseudotuberculosis serotype IB (strain PB1/+), this protein is Undecaprenyl-phosphate 4-deoxy-4-formamido-L-arabinose transferase.